We begin with the raw amino-acid sequence, 150 residues long: FAD synthase (150 aa).

ATP is bound by residues 11-12 (TF), 16-19 (HPGH), Asp-96, and Tyr-124.

Belongs to the archaeal FAD synthase family. Homodimer. A divalent metal cation serves as cofactor.

The catalysed reaction is FMN + ATP + H(+) = FAD + diphosphate. It participates in cofactor biosynthesis; FAD biosynthesis; FAD from FMN: step 1/1. Its function is as follows. Catalyzes the transfer of the AMP portion of ATP to flavin mononucleotide (FMN) to produce flavin adenine dinucleotide (FAD) coenzyme. The sequence is that of FAD synthase from Methanococcus maripaludis (strain C7 / ATCC BAA-1331).